The chain runs to 1203 residues: Rho GTPase-activating protein gacGG (1203 aa).

RCC1 repeat units lie at residues 52-104 (TGEL…AIME), 106-148 (GLLY…VVAD), 155-204 (KRSV…AIVE), 206-255 (NEVF…ARSG), 257-298 (GNVC…VLSE), 299-359 (KGEI…EGRN), and 361-410 (LSVY…YLRG). The disordered stretch occupies residues 316–343 (KLDVNSSPNINSSSGTTTPTTNTTTTTK). Over residues 320 to 343 (NSSPNINSSSGTTTPTTNTTTTTK) the composition is skewed to low complexity. In terms of domain architecture, Rho-GAP spans 381-594 (VDIAESMRRK…TIMKQYPLME (214 aa)). A coiled-coil region spans residues 649 to 679 (TLEIKNNQNNQNNQKENNNNNNNINNSNNNN). Disordered stretches follow at residues 657-725 (NNQN…TGNI), 746-789 (KDGN…NLSP), and 831-852 (FANS…LIGS). Low complexity-rich tracts occupy residues 746-788 (KDGN…PNLS) and 833-852 (NSGS…LIGS). Residues 995–1078 (FDLLEKSMTE…ISNQNLSRVN (84 aa)) are a coiled coil.

The protein localises to the cytoplasm. Rho GTPase-activating protein involved in the signal transduction pathway. This Dictyostelium discoideum (Social amoeba) protein is Rho GTPase-activating protein gacGG (gacGG).